The primary structure comprises 344 residues: Arginine N-succinyltransferase (344 aa).

Leu-125 contributes to the succinyl-CoA binding site. His-229 acts as the Proton donor in catalysis.

This sequence belongs to the arginine N-succinyltransferase family.

It carries out the reaction succinyl-CoA + L-arginine = N(2)-succinyl-L-arginine + CoA + H(+). It functions in the pathway amino-acid degradation; L-arginine degradation via AST pathway; L-glutamate and succinate from L-arginine: step 1/5. Catalyzes the transfer of succinyl-CoA to arginine to produce N(2)-succinylarginine. The sequence is that of Arginine N-succinyltransferase from Shigella flexneri.